A 307-amino-acid chain; its full sequence is Holliday junction branch migration complex subunit RuvB (307 aa).

Residues 1-167 (MKLQIKPPNT…FGVILNINYY (167 aa)) are large ATPase domain (RuvB-L). Residues Ile-5, Gly-48, Lys-51, Thr-52, Thr-53, Arg-157, Tyr-167, and Arg-204 each coordinate ATP. Thr-52 contacts Mg(2+). Positions 168-233 (SNAEIEKMVS…DLEGLFKNLM (66 aa)) are small ATPAse domain (RuvB-S). Positions 236–307 (KNGLQSIDVQ…NSGREYLVNF (72 aa)) are head domain (RuvB-H). 3 residues coordinate DNA: Arg-270, Lys-289, and Arg-294.

This sequence belongs to the RuvB family. Homohexamer. Forms an RuvA(8)-RuvB(12)-Holliday junction (HJ) complex. HJ DNA is sandwiched between 2 RuvA tetramers; dsDNA enters through RuvA and exits via RuvB. An RuvB hexamer assembles on each DNA strand where it exits the tetramer. Each RuvB hexamer is contacted by two RuvA subunits (via domain III) on 2 adjacent RuvB subunits; this complex drives branch migration. In the full resolvosome a probable DNA-RuvA(4)-RuvB(12)-RuvC(2) complex forms which resolves the HJ.

The protein resides in the cytoplasm. It catalyses the reaction ATP + H2O = ADP + phosphate + H(+). The RuvA-RuvB-RuvC complex processes Holliday junction (HJ) DNA during genetic recombination and DNA repair, while the RuvA-RuvB complex plays an important role in the rescue of blocked DNA replication forks via replication fork reversal (RFR). RuvA specifically binds to HJ cruciform DNA, conferring on it an open structure. The RuvB hexamer acts as an ATP-dependent pump, pulling dsDNA into and through the RuvAB complex. RuvB forms 2 homohexamers on either side of HJ DNA bound by 1 or 2 RuvA tetramers; 4 subunits per hexamer contact DNA at a time. Coordinated motions by a converter formed by DNA-disengaged RuvB subunits stimulates ATP hydrolysis and nucleotide exchange. Immobilization of the converter enables RuvB to convert the ATP-contained energy into a lever motion, pulling 2 nucleotides of DNA out of the RuvA tetramer per ATP hydrolyzed, thus driving DNA branch migration. The RuvB motors rotate together with the DNA substrate, which together with the progressing nucleotide cycle form the mechanistic basis for DNA recombination by continuous HJ branch migration. Branch migration allows RuvC to scan DNA until it finds its consensus sequence, where it cleaves and resolves cruciform DNA. This Mycoplasma genitalium (strain ATCC 33530 / DSM 19775 / NCTC 10195 / G37) (Mycoplasmoides genitalium) protein is Holliday junction branch migration complex subunit RuvB.